Consider the following 418-residue polypeptide: Probable endo-beta-1,4-glucanase celB (418 aa).

The first 18 residues, 1–18 (MVRTFAVTALALLPLVAA), serve as a signal peptide directing secretion. 3 N-linked (GlcNAc...) asparagine glycosylation sites follow: N46, N118, and N136. Catalysis depends on E215, which acts as the Nucleophile. The active-site Proton donor is E220. Residues N234 and N291 are each glycosylated (N-linked (GlcNAc...) asparagine).

Belongs to the glycosyl hydrolase 7 (cellulase C) family.

Its subcellular location is the secreted. It catalyses the reaction Endohydrolysis of (1-&gt;4)-beta-D-glucosidic linkages in cellulose, lichenin and cereal beta-D-glucans.. In terms of biological role, has endoglucanase activity on substrates containing beta-1,4 glycosidic bonds, like in carboxymethylcellulose (CMC), hydroxyethylcellulose (HEC) and beta-glucan. Involved in the degradation of complex natural cellulosic substrates. The protein is Probable endo-beta-1,4-glucanase celB (celB) of Aspergillus clavatus (strain ATCC 1007 / CBS 513.65 / DSM 816 / NCTC 3887 / NRRL 1 / QM 1276 / 107).